The primary structure comprises 93 residues: Alpha-elapitoxin-Oh3a (93 aa).

The first 21 residues, methionine 1–threonine 21, serve as a signal peptide directing secretion. 5 cysteine pairs are disulfide-bonded: cysteine 24/cysteine 42, cysteine 35/cysteine 63, cysteine 48/cysteine 52, cysteine 67/cysteine 78, and cysteine 79/cysteine 84.

The protein belongs to the three-finger toxin family. Long-chain subfamily. Type II alpha-neurotoxin sub-subfamily. In terms of tissue distribution, expressed by the venom gland.

The protein resides in the secreted. Its function is as follows. Binds to muscular and neuronal nicotinic acetylcholine receptor (nAChR) and inhibits acetylcholine from binding to the receptor, thereby impairing neuromuscular and neuronal transmission. Pseudo-irreversibly inhibits twitches in chick biventer cervicis nerve-muscle preparations in a concentration-dependent manner. The polypeptide is Alpha-elapitoxin-Oh3a (Ophiophagus hannah (King cobra)).